The sequence spans 203 residues: Holliday junction branch migration complex subunit RuvA (203 aa).

Positions 1–63 (MYEYLKGLVT…DTDITLFGFY (63 aa)) are domain I. Residues 64–142 (DLDEKQLFQK…DLEQSATLVG (79 aa)) form a domain II region. Positions 143-153 (QTAIDLGSQGD) are flexible linker. A domain III region spans residues 153–203 (DSPELSDALAALSALGYSAREVKAITPKLTDFAAQTTDQYLREGLRLLMKK).

It belongs to the RuvA family. As to quaternary structure, homotetramer. Forms an RuvA(8)-RuvB(12)-Holliday junction (HJ) complex. HJ DNA is sandwiched between 2 RuvA tetramers; dsDNA enters through RuvA and exits via RuvB. An RuvB hexamer assembles on each DNA strand where it exits the tetramer. Each RuvB hexamer is contacted by two RuvA subunits (via domain III) on 2 adjacent RuvB subunits; this complex drives branch migration. In the full resolvosome a probable DNA-RuvA(4)-RuvB(12)-RuvC(2) complex forms which resolves the HJ.

The protein resides in the cytoplasm. Its function is as follows. The RuvA-RuvB-RuvC complex processes Holliday junction (HJ) DNA during genetic recombination and DNA repair, while the RuvA-RuvB complex plays an important role in the rescue of blocked DNA replication forks via replication fork reversal (RFR). RuvA specifically binds to HJ cruciform DNA, conferring on it an open structure. The RuvB hexamer acts as an ATP-dependent pump, pulling dsDNA into and through the RuvAB complex. HJ branch migration allows RuvC to scan DNA until it finds its consensus sequence, where it cleaves and resolves the cruciform DNA. The sequence is that of Holliday junction branch migration complex subunit RuvA from Latilactobacillus sakei subsp. sakei (strain 23K) (Lactobacillus sakei subsp. sakei).